The primary structure comprises 589 residues: UvrABC system protein C (589 aa).

The GIY-YIG domain maps to 14–91 (HKPGCYLWKD…IAKYKPKYNM (78 aa)).

It belongs to the UvrC family. As to quaternary structure, interacts with UvrB in an incision complex.

The protein localises to the cytoplasm. The UvrABC repair system catalyzes the recognition and processing of DNA lesions. UvrC both incises the 5' and 3' sides of the lesion. The N-terminal half is responsible for the 3' incision and the C-terminal half is responsible for the 5' incision. The polypeptide is UvrABC system protein C (Malacoplasma penetrans (strain HF-2) (Mycoplasma penetrans)).